A 620-amino-acid polypeptide reads, in one-letter code: LEAF RUST 10 DISEASE-RESISTANCE LOCUS RECEPTOR-LIKE PROTEIN KINASE-like 2.3 (620 aa).

The signal sequence occupies residues M1–S30. Topologically, residues Q31 to P256 are extracellular. 9 N-linked (GlcNAc...) asparagine glycosylation sites follow: N75, N85, N93, N132, N148, N162, N189, N231, and N248. Residues F257–L277 form a helical membrane-spanning segment. At A278 to V620 the chain is on the cytoplasmic side. Positions K314–L596 constitute a Protein kinase domain. ATP is bound by residues V320–V328 and K342. The Proton acceptor role is filled by D431. The segment at D586 to V620 is disordered. Residues M600–V620 show a composition bias toward polar residues.

Belongs to the protein kinase superfamily. Ser/Thr protein kinase family.

It localises to the membrane. It carries out the reaction L-seryl-[protein] + ATP = O-phospho-L-seryl-[protein] + ADP + H(+). The catalysed reaction is L-threonyl-[protein] + ATP = O-phospho-L-threonyl-[protein] + ADP + H(+). This Arabidopsis thaliana (Mouse-ear cress) protein is LEAF RUST 10 DISEASE-RESISTANCE LOCUS RECEPTOR-LIKE PROTEIN KINASE-like 2.3.